The chain runs to 134 residues: Cell division protein SepF 1 (134 aa).

Belongs to the SepF family. As to quaternary structure, homodimer. Interacts with FtsZ.

It is found in the cytoplasm. Functionally, cell division protein that is part of the divisome complex and is recruited early to the Z-ring. Probably stimulates Z-ring formation, perhaps through the cross-linking of FtsZ protofilaments. Its function overlaps with FtsA. The sequence is that of Cell division protein SepF 1 from Streptomyces avermitilis (strain ATCC 31267 / DSM 46492 / JCM 5070 / NBRC 14893 / NCIMB 12804 / NRRL 8165 / MA-4680).